A 164-amino-acid chain; its full sequence is Phosphopantetheine adenylyltransferase (164 aa).

A substrate-binding site is contributed by serine 9. ATP contacts are provided by residues serine 9–phenylalanine 10 and histidine 17. The substrate site is built by lysine 41, threonine 74, and arginine 88. Residues glycine 89–arginine 91, glutamate 99, and asparagine 124–serine 130 each bind ATP.

Belongs to the bacterial CoaD family. Homohexamer. The cofactor is Mg(2+).

Its subcellular location is the cytoplasm. The enzyme catalyses (R)-4'-phosphopantetheine + ATP + H(+) = 3'-dephospho-CoA + diphosphate. It participates in cofactor biosynthesis; coenzyme A biosynthesis; CoA from (R)-pantothenate: step 4/5. Reversibly transfers an adenylyl group from ATP to 4'-phosphopantetheine, yielding dephospho-CoA (dPCoA) and pyrophosphate. In Lactobacillus helveticus (strain DPC 4571), this protein is Phosphopantetheine adenylyltransferase.